The following is a 635-amino-acid chain: MSHNFTESYDIIVIGAGHAGVEASLAASRMGCKVLLATINIEMLAFMPCNPSIGGSAKGIVVREVDALGGEMAKNIDKSYIQMKMLNTGKGPAVRALRAQADKELYSKEMRKTVENQENLTLRQTMINEILVEDGKVIGVKTATHQEYAAKAVIVTTGTALRGEIIIGDLKYSSGPNHSLAAIPLADNLRDLGFEIGRFKTGTPPRVKASSINYDVTEIQPGDEKANHFSYTSRDEDYVKDQVPCWLTYTNAESHEIIQNNLHRAPMFSGIVKGVGPRYCPSIEDKIVRFADKERHQLFLEPEGRDTEEVYVQGLSTSLPEDVQKDLVHSIKGLENAEMMRTGYAIEYDMIMPHQLRATLETKKISGLFTAGQTNGTSGYEEAAGQGIIAGINAALKIQGKQELILKRSDGYIGVMIDDLVTKGTVEPYRLLTSRAEYRLILRHDNADMRLTEMGREIGLVDDERWARFEIKKNQFDNEMKRLESIKLKPVKETNAKVEALGFKPLTDAVTAKEFMRRPEVSYQDVVQFIGPAAEELDEKIIELIETEIKYEGYISKALDQVEKMKRMEEKRIPANIDWDDIDSIATEARQKFKKINPETIGQASRISGVNPADISILMVYLEGKSRSISKNQAK.

Position 15–20 (15–20 (GAGHAG)) interacts with FAD. An NAD(+)-binding site is contributed by 276 to 290 (GPRYCPSIEDKIVRF).

Belongs to the MnmG family. In terms of assembly, homodimer. Heterotetramer of two MnmE and two MnmG subunits. FAD is required as a cofactor.

The protein resides in the cytoplasm. Its function is as follows. NAD-binding protein involved in the addition of a carboxymethylaminomethyl (cmnm) group at the wobble position (U34) of certain tRNAs, forming tRNA-cmnm(5)s(2)U34. This is tRNA uridine 5-carboxymethylaminomethyl modification enzyme MnmG from Streptococcus sanguinis (strain SK36).